The primary structure comprises 461 residues: Argininosuccinate lyase (461 aa).

This sequence belongs to the lyase 1 family. Argininosuccinate lyase subfamily.

The protein localises to the cytoplasm. The catalysed reaction is 2-(N(omega)-L-arginino)succinate = fumarate + L-arginine. It participates in amino-acid biosynthesis; L-arginine biosynthesis; L-arginine from L-ornithine and carbamoyl phosphate: step 3/3. The sequence is that of Argininosuccinate lyase from Desulfitobacterium hafniense (strain DSM 10664 / DCB-2).